The chain runs to 213 residues: Protein Syd (213 aa).

It belongs to the Syd family.

It localises to the cell inner membrane. Its function is as follows. Interacts with the SecY protein in vivo. May bind preferentially to an uncomplexed state of SecY, thus functioning either as a chelating agent for excess SecY in the cell or as a regulatory factor that negatively controls the translocase function. The chain is Protein Syd from Shewanella halifaxensis (strain HAW-EB4).